The chain runs to 268 residues: Phycocyanobilin lyase subunit alpha (268 aa).

This sequence belongs to the CpcE/RpcE/PecE family. As to quaternary structure, cpcE and CpcF associate to form a lyase.

Functionally, required for the chromophorylation of the cpcA gene product. The protein is Phycocyanobilin lyase subunit alpha (cpcE) of Picosynechococcus sp. (strain ATCC 27264 / PCC 7002 / PR-6) (Agmenellum quadruplicatum).